A 513-amino-acid chain; its full sequence is Acyltransferase uat1 (513 aa).

The Proton acceptor role is filled by His-158.

Belongs to the plant acyltransferase family.

It functions in the pathway secondary metabolite biosynthesis. Its function is as follows. Acyltransferase; part of the gene cluster that mediates the biosynthesis of the glycolipid biosurfactant ustilagic acid (UA). UA is a secreted cellobiose glycolipid that is toxic for many microorganisms and confers biocontrol activity to U.maydis. UA consists of 15,16-dihydroxypalmitic or 2,15,16-trihydroxypalmitic acid, which is O-glycosidically linked to cellobiose at its terminal hydroxyl group. In addition, the cellobiose moiety is acetylated and acylated with a short-chain hydroxy fatty acid. UA biosynthesis starts with omega-hydroxylation of palmitic acid catalyzed by the cytochrome P450 monooxygenase cyp1. Terminal hydroxylation of palmitic acid precedes subterminal hydroxylation catalyzed by the cytochrome P450 monooxygenase cyp2. Sequential glucosylation of the hydroxy fatty acid is probably catalyzed by the glycosyltransferase ugt1. The cellobiose lipid is further decorated by acetylation of the proximal glucose residue and by acylation with a short-chain beta-hydroxy fatty acid at the distal glucose residue. The acyltransferase uat1 may be a good candidate for catalyzing either acetylation or acylation of the cellobiose lipid. The fatty acid synthase fas2 may be involved in synthesis of the carbon backbone of the short-chain beta-hydroxy fatty acid esterified to the cellobiose disaccharide. The secreted UA consists of a mixture of both alpha-hydroxylated and non-hydroxylated glycolipids; therefore, alpha-hydroxylation of the long-chain fatty, catalyzed by the fatty acid hydroxylase ahd1, occurs late in UA biosynthesis and may be the last step before secretion. This chain is Acyltransferase uat1, found in Mycosarcoma maydis (Corn smut fungus).